Reading from the N-terminus, the 395-residue chain is Protein SGT1 (395 aa).

Lysine 32 participates in a covalent cross-link: Glycyl lysine isopeptide (Lys-Gly) (interchain with G-Cter in ubiquitin). The segment at 137–175 (KKNKKQKDSTNKHTIKPVESIENRGDNNSSHSPISPLKI) is disordered. Phosphoserine is present on residues serine 168 and serine 171. Positions 182–277 (SPKFKIDWYQ…IDSTQWKKLE (96 aa)) constitute a CS domain. Residues 312–395 (SYPSSSKKKI…PPEGMEPKHW (84 aa)) enclose the SGS domain. The tract at residues 373 to 395 (DWEDVSKGTVKTSPPEGMEPKHW) is disordered.

The protein belongs to the SGT1 family. In terms of assembly, interacts with SKP1/CBF3D. Part of SCF E3 ubiquitin ligase complexes containing SKP1, CDC53, HRT1 and some F-box proteins. Interacts with CIR1/CDC35.

Functionally, involved in ubiquitination and subsequent proteasomal degradation of target proteins. Required for both entry into S phase and kinetochore function. Also involved in cyclic AMP (cAMP) pathway, possibly by participating in the assembly or the conformational activation of specific multiprotein complexes. The protein is Protein SGT1 of Saccharomyces cerevisiae (strain ATCC 204508 / S288c) (Baker's yeast).